The chain runs to 126 residues: Thioredoxin-like 3-3 (126 aa).

A disordered region spans residues 1–24; the sequence is MRKQESEGANLEFESKSNDNGNVK. A Thioredoxin domain is found at 5–126; that stretch reads ESEGANLEFE…RLHDRLWLHS (122 aa). Catalysis depends on nucleophile residues Cys55 and Cys58. The cysteines at positions 55 and 58 are disulfide-linked.

This sequence belongs to the thioredoxin family.

In terms of biological role, probable thiol-disulfide oxidoreductase that may participate in various redox reactions. The chain is Thioredoxin-like 3-3 from Arabidopsis thaliana (Mouse-ear cress).